The sequence spans 924 residues: Isoleucine--tRNA ligase (924 aa).

A 'HIGH' region motif is present at residues 58–68; that stretch reads PYANGQIHVGH. Residue E561 coordinates L-isoleucyl-5'-AMP. A 'KMSKS' region motif is present at residues 602–606; sequence KMSKS. An ATP-binding site is contributed by K605. The Zn(2+) site is built by C887, C890, C907, and C910.

It belongs to the class-I aminoacyl-tRNA synthetase family. IleS type 1 subfamily. In terms of assembly, monomer. It depends on Zn(2+) as a cofactor.

It is found in the cytoplasm. The enzyme catalyses tRNA(Ile) + L-isoleucine + ATP = L-isoleucyl-tRNA(Ile) + AMP + diphosphate. Its function is as follows. Catalyzes the attachment of isoleucine to tRNA(Ile). As IleRS can inadvertently accommodate and process structurally similar amino acids such as valine, to avoid such errors it has two additional distinct tRNA(Ile)-dependent editing activities. One activity is designated as 'pretransfer' editing and involves the hydrolysis of activated Val-AMP. The other activity is designated 'posttransfer' editing and involves deacylation of mischarged Val-tRNA(Ile). The sequence is that of Isoleucine--tRNA ligase from Dichelobacter nodosus (strain VCS1703A).